The primary structure comprises 317 residues: Carbonic anhydrase 5B, mitochondrial (317 aa).

The transit peptide at 1-33 (MTVMSHLRVSLQVSSCTLLWRRFRVPRLVPLRS) directs the protein to the mitochondrion. The Alpha-carbonic anhydrase domain maps to 37 to 296 (YTCTYRTRNR…LMNRTVRSSF (260 aa)). Zn(2+) contacts are provided by His-130, His-132, and His-155. 235 to 236 (TT) is a substrate binding site.

It belongs to the alpha-carbonic anhydrase family. Requires Zn(2+) as cofactor.

Its subcellular location is the mitochondrion. The catalysed reaction is hydrogencarbonate + H(+) = CO2 + H2O. Functionally, mitochondrial carbonic anhydrase that catalyzes the reversible conversion of carbon dioxide to bicarbonate/HCO3. This chain is Carbonic anhydrase 5B, mitochondrial (Ca5b), found in Rattus norvegicus (Rat).